The chain runs to 391 residues: Inositol-tetrakisphosphate 1-kinase 2 (391 aa).

2 residues coordinate 1D-myo-inositol 1,3,4-trisphosphate: Lys90 and Lys132. Arg167 and Lys217 together coordinate ATP. The ATP-grasp domain maps to 178–384; sequence KLSDCSGSLF…FFQNLAQVKY (207 aa). 1D-myo-inositol 1,3,4-trisphosphate-binding residues include His228 and Lys260. Residues 249–260 and Ser275 contribute to the ATP site; that span reads QEFVNHGGVMFK. Mg(2+)-binding residues include Asp340, Asp355, and Asn357. Asn357 is a 1D-myo-inositol 1,3,4-trisphosphate binding site.

This sequence belongs to the ITPK1 family. As to quaternary structure, monomer. Mg(2+) is required as a cofactor. As to expression, expressed in seedling roots, cotyledons, rosette leaves, cauline leaves, stems, flowers, siliques and seeds.

The enzyme catalyses 1D-myo-inositol 3,4,5,6-tetrakisphosphate + ATP = 1D-myo-inositol 1,3,4,5,6-pentakisphosphate + ADP + H(+). It catalyses the reaction 1D-myo-inositol 1,3,4-trisphosphate + ATP = 1D-myo-inositol 1,3,4,5-tetrakisphosphate + ADP + H(+). The catalysed reaction is 1D-myo-inositol 1,3,4-trisphosphate + ATP = 1D-myo-inositol 1,3,4,6-tetrakisphosphate + ADP + H(+). Functionally, kinase that can phosphorylate various inositol polyphosphate such as Ins(3,4,5,6)P4 or Ins(1,3,4)P3. Phosphorylates Ins(3,4,5,6)P4 to form InsP5. This reaction is thought to have regulatory importance, since Ins(3,4,5,6)P4 is an inhibitor of plasma membrane Ca(2+)-activated Cl(-) channels, while Ins(1,3,4,5,6)P5 is not. Also phosphorylates Ins(1,3,4)P3 or a racemic mixture of Ins(1,4,6)P3 and Ins(3,4,6)P3 to form InsP4. Ins(1,3,4,6)P4 is an essential molecule in the hexakisphosphate (InsP6) pathway. Plays a role in seed coat development and lipid polyester barrier formation. The chain is Inositol-tetrakisphosphate 1-kinase 2 (ITPK2) from Arabidopsis thaliana (Mouse-ear cress).